A 309-amino-acid chain; its full sequence is Ketosamine-3-kinase (309 aa).

A Phosphoserine modification is found at Ser-20. 89–91 (EHL) provides a ligand contact to ATP. Asp-217 (proton acceptor) is an active-site residue.

The protein belongs to the fructosamine kinase family.

The enzyme catalyses N(6)-D-ribulosyl-L-lysyl-[protein] + ATP = N(6)-(3-O-phospho-D-ribulosyl)-L-lysyl-[protein] + ADP + H(+). The catalysed reaction is N(6)-(D-psicosyl)-L-lysyl-[protein] + ATP = N(6)-(3-O-phospho-D-psicosyl)-L-lysyl-[protein] + ADP + H(+). Its function is as follows. Ketosamine-3-kinase involved in protein deglycation by mediating phosphorylation of ribuloselysine and psicoselysine on glycated proteins, to generate ribuloselysine-3 phosphate and psicoselysine-3 phosphate, respectively. Ribuloselysine-3 phosphate and psicoselysine-3 phosphate adducts are unstable and decompose under physiological conditions. Not able to phosphorylate fructoselysine. In Mus musculus (Mouse), this protein is Ketosamine-3-kinase.